Consider the following 74-residue polypeptide: Defensin (74 aa).

The signal sequence occupies residues 1–22 (MRGLCICLVFLLVCGLVSATAA). The propeptide occupies 23 to 36 (APAESEVAHLRVRR). Intrachain disulfides connect C40-C61, C47-C69, and C51-C71.

As to expression, hemolymph.

Its subcellular location is the secreted. In terms of biological role, antibacterial activity against Gram-positive and Gram-negative bacteria. This Dermacentor variabilis (American dog tick) protein is Defensin (VSNA1).